The chain runs to 397 residues: Serpin B10 (397 aa).

The Nuclear localization signal signature appears at 74–77 (KKRK).

Belongs to the serpin family. Ov-serpin subfamily.

It localises to the nucleus. The protein localises to the cytoplasm. Its function is as follows. Protease inhibitor that may play a role in the regulation of protease activities during hematopoiesis and apoptosis induced by TNF. May regulate protease activities in the cytoplasm and in the nucleus. The protein is Serpin B10 (SERPINB10) of Plecturocebus moloch (Dusky titi monkey).